The chain runs to 157 residues: Crossover junction endodeoxyribonuclease RuvC (157 aa).

Catalysis depends on residues Asp7, Glu66, and Asp139. Asp7, Glu66, and Asp139 together coordinate Mg(2+).

This sequence belongs to the RuvC family. In terms of assembly, homodimer which binds Holliday junction (HJ) DNA. The HJ becomes 2-fold symmetrical on binding to RuvC with unstacked arms; it has a different conformation from HJ DNA in complex with RuvA. In the full resolvosome a probable DNA-RuvA(4)-RuvB(12)-RuvC(2) complex forms which resolves the HJ. Requires Mg(2+) as cofactor.

The protein localises to the cytoplasm. It carries out the reaction Endonucleolytic cleavage at a junction such as a reciprocal single-stranded crossover between two homologous DNA duplexes (Holliday junction).. Its function is as follows. The RuvA-RuvB-RuvC complex processes Holliday junction (HJ) DNA during genetic recombination and DNA repair. Endonuclease that resolves HJ intermediates. Cleaves cruciform DNA by making single-stranded nicks across the HJ at symmetrical positions within the homologous arms, yielding a 5'-phosphate and a 3'-hydroxyl group; requires a central core of homology in the junction. The consensus cleavage sequence is 5'-(A/T)TT(C/G)-3'. Cleavage occurs on the 3'-side of the TT dinucleotide at the point of strand exchange. HJ branch migration catalyzed by RuvA-RuvB allows RuvC to scan DNA until it finds its consensus sequence, where it cleaves and resolves the cruciform DNA. This Helicobacter pylori (strain Shi470) protein is Crossover junction endodeoxyribonuclease RuvC.